Reading from the N-terminus, the 442-residue chain is C4-dicarboxylate transport protein (442 aa).

The next 8 helical transmembrane spans lie at 19 to 39, 55 to 75, 90 to 110, 161 to 181, 199 to 219, 232 to 252, 318 to 338, and 366 to 386; these read QLYF…HFEP, LVKM…IAGM, AYFL…AHVV, ILQV…VGDA, LVGI…AFTI, WLVG…LGFV, IYMT…LTLG, and AATL…ILGV.

This sequence belongs to the dicarboxylate/amino acid:cation symporter (DAACS) (TC 2.A.23) family.

The protein resides in the cell inner membrane. Its function is as follows. Responsible for the transport of dicarboxylates such as succinate, fumarate, and malate from the periplasm across the membrane. The protein is C4-dicarboxylate transport protein of Delftia acidovorans (strain DSM 14801 / SPH-1).